The primary structure comprises 550 residues: Hydroxylamine reductase (550 aa).

Residues Cys3, Cys6, Cys18, and Cys25 each contribute to the [2Fe-2S] cluster site. The hybrid [4Fe-2O-2S] cluster site is built by His249, Glu273, Cys317, Cys405, Cys433, Cys458, Glu492, and Lys494. Cys405 is modified (cysteine persulfide).

Belongs to the HCP family. [2Fe-2S] cluster is required as a cofactor. It depends on hybrid [4Fe-2O-2S] cluster as a cofactor.

The protein localises to the cytoplasm. The catalysed reaction is A + NH4(+) + H2O = hydroxylamine + AH2 + H(+). In terms of biological role, catalyzes the reduction of hydroxylamine to form NH(3) and H(2)O. The chain is Hydroxylamine reductase from Escherichia coli (strain SE11).